The primary structure comprises 255 residues: MLNVSGLWAEYQGKPALQDVSLQIASGQLVVVLGPSGCGKTTLLNLIAGFMTPSAGVITLDNIPVSGPSAERGVVFQNEGLLPWRDVVSNVEFGLQLAGMSKEQRRVTALKMLNRVGLAGFEHHFIWQLSGGMRQRVGIARALAVDPRLLLLDEPFGALDAFTREQMQELLLTIWRDTGKQILLITHDIEEAVFLASELLLLSPGPGQVVERLSLNFGQRYAEGEPCRAIKSDPEFIARREYVLGKVFQQREVLI.

An ABC transporter domain is found at Leu2 to Ala229. Gly34–Thr41 is a binding site for ATP.

It belongs to the ABC transporter superfamily. Taurine importer (TC 3.A.1.17.1) family. As to quaternary structure, the complex is composed of two ATP-binding proteins (TauB), two transmembrane proteins (TauC) and a solute-binding protein (TauA).

The protein localises to the cell inner membrane. The enzyme catalyses taurine(out) + ATP + H2O = taurine(in) + ADP + phosphate + H(+). In terms of biological role, part of the ABC transporter complex TauABC involved in taurine import. Responsible for energy coupling to the transport system. This Yersinia pseudotuberculosis serotype I (strain IP32953) protein is Taurine import ATP-binding protein TauB.